A 131-amino-acid polypeptide reads, in one-letter code: Thioredoxin H4-1 (131 aa).

Residues Ser-3–Asp-129 enclose the Thioredoxin domain. Catalysis depends on nucleophile residues Cys-55 and Cys-58. A disulfide bond links Cys-55 and Cys-58.

This sequence belongs to the thioredoxin family. Plant H-type subfamily.

It is found in the cytoplasm. Its function is as follows. Probable thiol-disulfide oxidoreductase that may be involved in the redox regulation of a number of cytosolic enzymes. This is Thioredoxin H4-1 from Oryza sativa subsp. japonica (Rice).